The chain runs to 229 residues: Ribonuclease HII (229 aa).

The RNase H type-2 domain maps to W34–M223. A divalent metal cation contacts are provided by D40, E41, and D131. Positions M209–E229 are disordered. Positions G220 to E229 are enriched in acidic residues.

Belongs to the RNase HII family. It depends on Mn(2+) as a cofactor. Requires Mg(2+) as cofactor.

It localises to the cytoplasm. It catalyses the reaction Endonucleolytic cleavage to 5'-phosphomonoester.. Endonuclease that specifically degrades the RNA of RNA-DNA hybrids. This is Ribonuclease HII from Rhizobium etli (strain CIAT 652).